The following is a 169-amino-acid chain: Lipoprotein signal peptidase (169 aa).

Transmembrane regions (helical) follow at residues 4–24 (PICS…ILDI), 29–49 (WVMA…FNLT), 70–90 (WFFA…MYRS), and 101–121 (YALI…HGAV). Active-site residues include D123 and D141. The helical transmembrane segment at 137 to 157 (FNLADVAICIGAALVIFEGFL) threads the bilayer.

This sequence belongs to the peptidase A8 family.

The protein localises to the cell inner membrane. The catalysed reaction is Release of signal peptides from bacterial membrane prolipoproteins. Hydrolyzes -Xaa-Yaa-Zaa-|-(S,diacylglyceryl)Cys-, in which Xaa is hydrophobic (preferably Leu), and Yaa (Ala or Ser) and Zaa (Gly or Ala) have small, neutral side chains.. It functions in the pathway protein modification; lipoprotein biosynthesis (signal peptide cleavage). Functionally, this protein specifically catalyzes the removal of signal peptides from prolipoproteins. The protein is Lipoprotein signal peptidase of Yersinia pestis bv. Antiqua (strain Antiqua).